The sequence spans 144 residues: Putative pre-16S rRNA nuclease (144 aa).

It belongs to the YqgF nuclease family.

It is found in the cytoplasm. Its function is as follows. Could be a nuclease involved in processing of the 5'-end of pre-16S rRNA. The sequence is that of Putative pre-16S rRNA nuclease from Acaryochloris marina (strain MBIC 11017).